A 101-amino-acid chain; its full sequence is Small ribosomal subunit protein uS14 (101 aa).

The protein belongs to the universal ribosomal protein uS14 family. As to quaternary structure, part of the 30S ribosomal subunit. Contacts proteins S3 and S10.

Its function is as follows. Binds 16S rRNA, required for the assembly of 30S particles and may also be responsible for determining the conformation of the 16S rRNA at the A site. The sequence is that of Small ribosomal subunit protein uS14 from Aeromonas hydrophila subsp. hydrophila (strain ATCC 7966 / DSM 30187 / BCRC 13018 / CCUG 14551 / JCM 1027 / KCTC 2358 / NCIMB 9240 / NCTC 8049).